Here is a 76-residue protein sequence, read N- to C-terminus: Conotoxin Im6.9 (76 aa).

Positions 1-19 are cleaved as a signal peptide; sequence MEKLTILLLVTAVLMSTQA. A propeptide spanning residues 20 to 45 is cleaved from the precursor; that stretch reads LMQSGIEKRQRAKIKFFSKRKTTAER. Cystine bridges form between C51–C65, C58–C69, and C64–C73.

This sequence belongs to the conotoxin O2 superfamily. As to expression, expressed by the venom duct.

The protein localises to the secreted. Its function is as follows. Probable neurotoxin. The polypeptide is Conotoxin Im6.9 (Conus imperialis (Imperial cone)).